A 284-amino-acid polypeptide reads, in one-letter code: Gigasin-3a (284 aa).

Residues 202 to 284 (GLDNPLPNPR…FKAGRKNNRN (83 aa)) form a disordered region. Positions 223–245 (SSPLPESTPKSSTKTSSASPIKS) are enriched in low complexity. Positions 246–257 (RQGKKLRGKKQN) are enriched in basic residues. A compositionally biased stretch (polar residues) spans 258 to 267 (KTGNTRFTYR). Positions 268-284 (NNKRNIKFKAGRKNNRN) are enriched in basic residues.

In terms of tissue distribution, component of the organic matrix of calcified shell layers.

The protein is Gigasin-3a of Magallana gigas (Pacific oyster).